Consider the following 189-residue polypeptide: Adenylate kinase (189 aa).

10-15 (GAGKGT) is an ATP binding site. The segment at 30 to 59 (STGDIFRANVSGGTELGKKAQAYMDRGDLV) is NMP. Residues Thr31, Arg36, 57–59 (DLV), 85–88 (GFPR), and Gln92 contribute to the AMP site. The tract at residues 126 to 136 (ERARIDNRSDD) is LID. ATP is bound at residue Arg127. Arg133 and Arg144 together coordinate AMP. Gly172 lines the ATP pocket.

The protein belongs to the adenylate kinase family. In terms of assembly, monomer.

The protein localises to the cytoplasm. It catalyses the reaction AMP + ATP = 2 ADP. The protein operates within purine metabolism; AMP biosynthesis via salvage pathway; AMP from ADP: step 1/1. Catalyzes the reversible transfer of the terminal phosphate group between ATP and AMP. Plays an important role in cellular energy homeostasis and in adenine nucleotide metabolism. This is Adenylate kinase from Thermobifida fusca (strain YX).